A 789-amino-acid polypeptide reads, in one-letter code: Zinc finger FYVE domain-containing protein 1 (789 aa).

Residues 416–788 (MAHSSFFPDE…LSVMTGKGPL (373 aa)) form a required for localization in the lipid droplets region. 2 FYVE-type zinc fingers span residues 598-659 (NSQI…EARN) and 715-775 (DHEI…KKPA). Residues C604, C607, C620, C623, C628, C631, C651, C654, C721, C724, C737, C740, C745, C748, C767, and C770 each coordinate Zn(2+).

In terms of assembly, interacts with RAB18 (in GTP-bound form). Interacts with BSCL2 in a RAB18-dependent manner. Interacts with ZW10.

It localises to the golgi apparatus. It is found in the golgi stack. The protein localises to the endoplasmic reticulum. The protein resides in the preautophagosomal structure. Its subcellular location is the lipid droplet. It localises to the mitochondrion. Plays a role in the formation of lipid droplets (LDs) which are storage organelles at the center of lipid and energy homeostasis. Regulates the morphology, size and distribution of LDs. Mediates the formation of endoplasmic reticulum-lipid droplets (ER-LD) contact sites by forming a complex with RAB18 and ZW10. Binds to phosphatidylinositol 3-phosphate (PtdIns3P) through FYVE-type zinc finger. The chain is Zinc finger FYVE domain-containing protein 1 (ZFYVE1) from Pongo abelii (Sumatran orangutan).